Consider the following 447-residue polypeptide: Cysteine--tRNA ligase (447 aa).

Residue C28 coordinates Zn(2+). The 'HIGH' region signature appears at 30-40 (PTVYNYIHIGN). Residues C211, H236, and E240 each contribute to the Zn(2+) site. Positions 268–272 (KMSKS) match the 'KMSKS' region motif. Position 271 (K271) interacts with ATP.

It belongs to the class-I aminoacyl-tRNA synthetase family. As to quaternary structure, monomer. Zn(2+) serves as cofactor.

The protein localises to the cytoplasm. The catalysed reaction is tRNA(Cys) + L-cysteine + ATP = L-cysteinyl-tRNA(Cys) + AMP + diphosphate. This Streptococcus agalactiae serotype Ia (strain ATCC 27591 / A909 / CDC SS700) protein is Cysteine--tRNA ligase.